We begin with the raw amino-acid sequence, 234 residues long: Probable GTP-binding protein EngB (234 aa).

One can recognise an EngB-type G domain in the interval 23 to 209; sequence AVPEVAFAGR…QRTVAGWLCL (187 aa). GTP is bound by residues 31–38, 58–62, 82–85, 149–152, and 187–190; these read GRSNAGKS, GRTQH, DLPG, TKAD, and LFSS. Mg(2+)-binding residues include Ser-38 and Thr-60. Positions 210–234 are disordered; that stretch reads PEAMPPSPDAEPAKKTPSPDAQRGE.

This sequence belongs to the TRAFAC class TrmE-Era-EngA-EngB-Septin-like GTPase superfamily. EngB GTPase family. Requires Mg(2+) as cofactor.

Its function is as follows. Necessary for normal cell division and for the maintenance of normal septation. The polypeptide is Probable GTP-binding protein EngB (Ralstonia nicotianae (strain ATCC BAA-1114 / GMI1000) (Ralstonia solanacearum)).